We begin with the raw amino-acid sequence, 212 residues long: Glutathione S-transferase P 1 (212 aa).

Residues 2–83 (PGYVLTYFPV…YLGNKHGLTG (82 aa)) form the GST N-terminal domain. Glutathione-binding positions include Tyr-8, Arg-14, Trp-39, Lys-47, 54-55 (QL), and 67-68 (QS). The 122-residue stretch at 85 to 206 (NDEERGHIDM…KSDARNKRPI (122 aa)) folds into the GST C-terminal domain.

The protein belongs to the GST superfamily. Pi family. As to quaternary structure, homodimer. Expressed only in embryos. Not expressed in liver, lung, heart, kidney and ovary.

It localises to the cytoplasm. It is found in the mitochondrion. The protein localises to the nucleus. It catalyses the reaction RX + glutathione = an S-substituted glutathione + a halide anion + H(+). In terms of biological role, conjugation of reduced glutathione to a wide number of exogenous and endogenous hydrophobic electrophiles. Highly active towards 1-chloro-2,4-dinitrobenzene and organic isothiocyanates, but shows no detectable activity towards 1,2-dichloro-4-nitrobenzene, p-nitrobenzylchloride, trans-4-phenyl-3-buten-2-one (tPBO) and ethacrynic acid. May be associated with cellular proliferation. The protein is Glutathione S-transferase P 1 (gstp1) of Xenopus laevis (African clawed frog).